A 253-amino-acid polypeptide reads, in one-letter code: Tryptophan synthase alpha chain (253 aa).

Active-site proton acceptor residues include E46 and D57.

The protein belongs to the TrpA family. Tetramer of two alpha and two beta chains.

It catalyses the reaction (1S,2R)-1-C-(indol-3-yl)glycerol 3-phosphate + L-serine = D-glyceraldehyde 3-phosphate + L-tryptophan + H2O. It functions in the pathway amino-acid biosynthesis; L-tryptophan biosynthesis; L-tryptophan from chorismate: step 5/5. Functionally, the alpha subunit is responsible for the aldol cleavage of indoleglycerol phosphate to indole and glyceraldehyde 3-phosphate. This is Tryptophan synthase alpha chain from Dictyoglomus thermophilum (strain ATCC 35947 / DSM 3960 / H-6-12).